Consider the following 151-residue polypeptide: SsrA-binding protein (151 aa).

It belongs to the SmpB family.

The protein localises to the cytoplasm. Functionally, required for rescue of stalled ribosomes mediated by trans-translation. Binds to transfer-messenger RNA (tmRNA), required for stable association of tmRNA with ribosomes. tmRNA and SmpB together mimic tRNA shape, replacing the anticodon stem-loop with SmpB. tmRNA is encoded by the ssrA gene; the 2 termini fold to resemble tRNA(Ala) and it encodes a 'tag peptide', a short internal open reading frame. During trans-translation Ala-aminoacylated tmRNA acts like a tRNA, entering the A-site of stalled ribosomes, displacing the stalled mRNA. The ribosome then switches to translate the ORF on the tmRNA; the nascent peptide is terminated with the 'tag peptide' encoded by the tmRNA and targeted for degradation. The ribosome is freed to recommence translation, which seems to be the essential function of trans-translation. The protein is SsrA-binding protein of Chlamydia muridarum (strain MoPn / Nigg).